Here is a 320-residue protein sequence, read N- to C-terminus: Beta-sarcoglycan (320 aa).

Low complexity predominate over residues 1 to 10; the sequence is MAAAAAAAAA. The interval 1–34 is disordered; that stretch reads MAAAAAAAAATEQQSSNGPVKKSMREKAVERRNV. The Cytoplasmic segment spans residues 1 to 67; it reads MAAAAAAAAA…GLRGRKGNLA (67 aa). Basic and acidic residues predominate over residues 23–34; that stretch reads SMREKAVERRNV. The chain crosses the membrane as a helical; Signal-anchor for type II membrane protein span at residues 68–88; the sequence is ICVIVLLFILAVINLLITLVI. Residues 89–320 are Extracellular-facing; that stretch reads WAVIRIGPNG…VADNPCGNTH (232 aa). N-linked (GlcNAc...) asparagine glycosylation is found at N160, N213, and N260. Cystine bridges form between C290–C316 and C292–C309.

Belongs to the sarcoglycan beta/delta/gamma/zeta family. Cross-link to form 2 major subcomplexes: one consisting of SGCB, SGCD and SGCG and the other consisting of SGCB and SGCD. The association between SGCB and SGCG is particularly strong while SGCA is loosely associated with the other sarcoglycans. In terms of processing, disulfide bonds are present.

The protein resides in the cell membrane. It is found in the sarcolemma. The protein localises to the cytoplasm. Its subcellular location is the cytoskeleton. Its function is as follows. Component of the sarcoglycan complex, a subcomplex of the dystrophin-glycoprotein complex which forms a link between the F-actin cytoskeleton and the extracellular matrix. The polypeptide is Beta-sarcoglycan (SGCB) (Mesocricetus auratus (Golden hamster)).